A 383-amino-acid chain; its full sequence is Glucose-1-phosphate adenylyltransferase (383 aa).

Alpha-D-glucose 1-phosphate contacts are provided by residues Tyr-99, Gly-164, 179–180, and Ser-190; that span reads EK.

It belongs to the bacterial/plant glucose-1-phosphate adenylyltransferase family. In terms of assembly, homotetramer.

The catalysed reaction is alpha-D-glucose 1-phosphate + ATP + H(+) = ADP-alpha-D-glucose + diphosphate. Its pathway is glycan biosynthesis; glycogen biosynthesis. In terms of biological role, involved in the biosynthesis of ADP-glucose, a building block required for the elongation reactions to produce glycogen. Catalyzes the reaction between ATP and alpha-D-glucose 1-phosphate (G1P) to produce pyrophosphate and ADP-Glc. The protein is Glucose-1-phosphate adenylyltransferase of Halalkalibacterium halodurans (strain ATCC BAA-125 / DSM 18197 / FERM 7344 / JCM 9153 / C-125) (Bacillus halodurans).